The primary structure comprises 845 residues: Beta-mannosidase B (845 aa).

N252 carries an N-linked (GlcNAc...) asparagine glycan. The active-site Proton donor is the E432. 2 N-linked (GlcNAc...) asparagine glycosylation sites follow: N717 and N723.

It belongs to the glycosyl hydrolase 2 family. Beta-mannosidase B subfamily.

It catalyses the reaction Hydrolysis of terminal, non-reducing beta-D-mannose residues in beta-D-mannosides.. The protein operates within glycan metabolism; N-glycan degradation. Functionally, exoglycosidase that cleaves the single beta-linked mannose residue from the non-reducing end of beta-mannosidic oligosaccharides of various complexity and length. Prefers mannobiose over mannotriose and has no activity against polymeric mannan. Is also severely restricted by galactosyl substitutions at the +1 subsite. This is Beta-mannosidase B (mndB) from Aspergillus fumigatus (strain ATCC MYA-4609 / CBS 101355 / FGSC A1100 / Af293) (Neosartorya fumigata).